The sequence spans 347 residues: 5-deoxyribose 1-phosphate isomerase (347 aa).

Substrate-binding positions include 48 to 50 (RGA), R91, and Q198. D239 serves as the catalytic Proton donor. 249-250 (NK) lines the substrate pocket.

This sequence belongs to the EIF-2B alpha/beta/delta subunits family. DrdI subfamily.

The catalysed reaction is 5-deoxy-alpha-D-ribose 1-phosphate = 5-deoxy-D-ribulose 1-phosphate. The protein operates within carbohydrate degradation. Its function is as follows. Catalyzes the isomerization of 5-deoxy-alpha-D-ribose 1-phosphate to 5-deoxy-D-ribulose 1-phosphate, as part of a 5-deoxyribose salvage pathway that recycles this toxic radical SAM enzyme by-product to mainstream metabolites. The protein is 5-deoxyribose 1-phosphate isomerase of Petrotoga mobilis (strain DSM 10674 / SJ95).